The chain runs to 677 residues: Methionine--tRNA ligase (677 aa).

The 'HIGH' region signature appears at 15 to 25; it reads PYANGSIHLGH. The Zn(2+) site is built by cysteine 146, cysteine 149, cysteine 159, and cysteine 162. A 'KMSKS' region motif is present at residues 333 to 337; that stretch reads KMSKS. Lysine 336 contacts ATP. The region spanning 575 to 677 is the tRNA-binding domain; that stretch reads DFAKVDLRVA…DGAKPGQQVK (103 aa).

It belongs to the class-I aminoacyl-tRNA synthetase family. MetG type 1 subfamily. In terms of assembly, homodimer. It depends on Zn(2+) as a cofactor.

The protein localises to the cytoplasm. It carries out the reaction tRNA(Met) + L-methionine + ATP = L-methionyl-tRNA(Met) + AMP + diphosphate. Functionally, is required not only for elongation of protein synthesis but also for the initiation of all mRNA translation through initiator tRNA(fMet) aminoacylation. This chain is Methionine--tRNA ligase, found in Citrobacter koseri (strain ATCC BAA-895 / CDC 4225-83 / SGSC4696).